We begin with the raw amino-acid sequence, 338 residues long: MSALTPASEVILRHREQFSSHHLLFAGDIQDTLATQIDAASVRVHTNQYHHWQSLIRTLGESAWFGLVAEKAFTQGCDTLIYYWPKSKQEARFQLRSLFSVLPKGINIFIVGENRSGVRSVDKLMDGMATFRKIDSARRCSLFYGQLEHEVQFEQDNWWNSYQVENVIVNTLPGVFSQDELDVGSRLLLSTFDKPLSGNLLDIACGAGVLAAVLGKKNPELALTLSDVNAAAIASSKATLKANKLEGHVVVSNVYSNIEDKFDWIISNPPFHEGLKTSLLATDDLIRQAPNHLKPGGKLRIVANAFLPYPDLLDKTFGTHEVIAQTGKFKVYQATKKF.

Belongs to the methyltransferase superfamily. RsmC family. In terms of assembly, monomer.

The protein resides in the cytoplasm. The catalysed reaction is guanosine(1207) in 16S rRNA + S-adenosyl-L-methionine = N(2)-methylguanosine(1207) in 16S rRNA + S-adenosyl-L-homocysteine + H(+). Functionally, specifically methylates the guanine in position 1207 of 16S rRNA in the 30S particle. This chain is Ribosomal RNA small subunit methyltransferase C, found in Photorhabdus laumondii subsp. laumondii (strain DSM 15139 / CIP 105565 / TT01) (Photorhabdus luminescens subsp. laumondii).